We begin with the raw amino-acid sequence, 316 residues long: Glutathione synthetase (316 aa).

The 186-residue stretch at Lys125–Glu310 folds into the ATP-grasp domain. Residue Trp151–Gly207 participates in ATP binding. Mg(2+)-binding residues include Glu281 and Asn283.

Belongs to the prokaryotic GSH synthase family. Mg(2+) is required as a cofactor. The cofactor is Mn(2+).

The catalysed reaction is gamma-L-glutamyl-L-cysteine + glycine + ATP = glutathione + ADP + phosphate + H(+). It participates in sulfur metabolism; glutathione biosynthesis; glutathione from L-cysteine and L-glutamate: step 2/2. This chain is Glutathione synthetase, found in Shigella flexneri.